Reading from the N-terminus, the 184-residue chain is ATP synthase subunit delta (184 aa).

Belongs to the ATPase delta chain family. As to quaternary structure, F-type ATPases have 2 components, F(1) - the catalytic core - and F(0) - the membrane proton channel. F(1) has five subunits: alpha(3), beta(3), gamma(1), delta(1), epsilon(1). F(0) has three main subunits: a(1), b(2) and c(10-14). The alpha and beta chains form an alternating ring which encloses part of the gamma chain. F(1) is attached to F(0) by a central stalk formed by the gamma and epsilon chains, while a peripheral stalk is formed by the delta and b chains.

The protein resides in the cell inner membrane. Its function is as follows. F(1)F(0) ATP synthase produces ATP from ADP in the presence of a proton or sodium gradient. F-type ATPases consist of two structural domains, F(1) containing the extramembraneous catalytic core and F(0) containing the membrane proton channel, linked together by a central stalk and a peripheral stalk. During catalysis, ATP synthesis in the catalytic domain of F(1) is coupled via a rotary mechanism of the central stalk subunits to proton translocation. Functionally, this protein is part of the stalk that links CF(0) to CF(1). It either transmits conformational changes from CF(0) to CF(1) or is implicated in proton conduction. The protein is ATP synthase subunit delta of Rickettsia massiliae (strain Mtu5).